Consider the following 918-residue polypeptide: Aconitase-ribosomal protein bL21m fusion protein (918 aa).

The N-terminal 30 residues, 1 to 30, are a transit peptide targeting the mitochondrion; that stretch reads MATFARMKLCLSGSSQAIPSKGISLVAARF. Residues 31–811 form a homocitrate dehydratase, mitochondrial region; that stretch reads QSTASRASYV…IDSIKQQPDH (781 aa). Substrate is bound by residues Gln105 and 198 to 200; that span reads DSH. Residues Cys394, Cys457, and Cys460 each contribute to the [4Fe-4S] cluster site. Residues Arg484, Arg489, Lys619, and 680-681 contribute to the substrate site; that span reads AR. The tract at residues 812–918 is large ribosomal subunit protein bL21m; the sequence is YADAYIFNRH…ILRVTELKLN (107 aa).

The protein in the N-terminal section; belongs to the aconitase/IPM isomerase family. It in the C-terminal section; belongs to the bacterial ribosomal protein bL21 family. In terms of assembly, component of the mitochondrial large ribosomal subunit (mt-LSU). Mature yeast 74S mitochondrial ribosomes consist of a small (37S) and a large (54S) subunit. The 37S small subunit contains a 15S ribosomal RNA (15S mt-rRNA) and at least 32 different proteins. The 54S large subunit contains a 21S rRNA (21S mt-rRNA) and at least 45 different proteins. [4Fe-4S] cluster is required as a cofactor.

The protein localises to the mitochondrion. Its subcellular location is the nucleus. It carries out the reaction (2R)-homocitrate = cis-homoaconitate + H2O. Its pathway is amino-acid biosynthesis; L-lysine biosynthesis via AAA pathway; L-alpha-aminoadipate from 2-oxoglutarate: step 2/5. Its function is as follows. Catalyzes the reversible dehydration of (R)-homocitrate to cis-homoaconitate, a step in the alpha-aminoadipate pathway for lysine biosynthesis. Component of the mitochondrial ribosome (mitoribosome), a dedicated translation machinery responsible for the synthesis of mitochondrial genome-encoded proteins, including at least some of the essential transmembrane subunits of the mitochondrial respiratory chain. The mitoribosomes are attached to the mitochondrial inner membrane and translation products are cotranslationally integrated into the membrane. The sequence is that of Aconitase-ribosomal protein bL21m fusion protein (aco2) from Schizosaccharomyces pombe (strain 972 / ATCC 24843) (Fission yeast).